Here is a 475-residue protein sequence, read N- to C-terminus: Aspartyl/glutamyl-tRNA(Asn/Gln) amidotransferase subunit B (475 aa).

Belongs to the GatB/GatE family. GatB subfamily. As to quaternary structure, heterotrimer of A, B and C subunits.

It carries out the reaction L-glutamyl-tRNA(Gln) + L-glutamine + ATP + H2O = L-glutaminyl-tRNA(Gln) + L-glutamate + ADP + phosphate + H(+). The enzyme catalyses L-aspartyl-tRNA(Asn) + L-glutamine + ATP + H2O = L-asparaginyl-tRNA(Asn) + L-glutamate + ADP + phosphate + 2 H(+). Its function is as follows. Allows the formation of correctly charged Asn-tRNA(Asn) or Gln-tRNA(Gln) through the transamidation of misacylated Asp-tRNA(Asn) or Glu-tRNA(Gln) in organisms which lack either or both of asparaginyl-tRNA or glutaminyl-tRNA synthetases. The reaction takes place in the presence of glutamine and ATP through an activated phospho-Asp-tRNA(Asn) or phospho-Glu-tRNA(Gln). The polypeptide is Aspartyl/glutamyl-tRNA(Asn/Gln) amidotransferase subunit B (Pelodictyon phaeoclathratiforme (strain DSM 5477 / BU-1)).